The chain runs to 361 residues: Cyclin-Y-like protein 2 (361 aa).

Residues 204–286 (MRLTAEFAIV…QFLKLINYNN (83 aa)) enclose the Cyclin N-terminal domain.

This sequence belongs to the cyclin family. Cyclin Y subfamily.

This Homo sapiens (Human) protein is Cyclin-Y-like protein 2 (CCNYL2).